The chain runs to 91 residues: B3 domain-containing protein Os03g0164300 (91 aa).

A DNA-binding region (TF-B3) is located at residues 1 to 91; the sequence is MTNAKMTFAV…VLVLKVHVLK (91 aa).

The protein localises to the nucleus. The protein is B3 domain-containing protein Os03g0164300 of Oryza sativa subsp. japonica (Rice).